Reading from the N-terminus, the 111-residue chain is Transcription initiation factor IIA subunit 2 (111 aa).

It belongs to the TFIIA subunit 2 family. TFIIA is a heterodimer of the large unprocessed subunit 1 and a small subunit gamma. It was originally believed to be a heterotrimer of an alpha, a beta and a gamma subunit. Interacts with NCOA6 general coactivator. TFIIA forms a complex with TBP.

It is found in the nucleus. In terms of biological role, TFIIA is a component of the transcription machinery of RNA polymerase II and plays an important role in transcriptional activation. TFIIA in a complex with TBP mediates transcriptional activity. This chain is Transcription initiation factor IIA subunit 2 (gtf2a2), found in Paralichthys olivaceus (Bastard halibut).